Reading from the N-terminus, the 668-residue chain is Myb-like protein W (668 aa).

6 disordered regions span residues 57-124 (LDQF…NESV), 246-357 (EKEK…EEEV), 403-432 (KPKS…TDKG), 497-546 (YTNT…NKER), 561-583 (SMGR…TTTS), and 631-668 (QCEE…DEII). The span at 69–121 (NNNNNNNSNNNNNNNNNNNNNNNNNNNNNNNNNNNNNNNNNNYNNYNNNNNNN) shows a compositional bias: low complexity. Residues 246–268 (EKEKRKKEREEREEREKQEKQEQ) are compositionally biased toward basic and acidic residues. A compositionally biased stretch (low complexity) spans 293-307 (NNKDNNHNGYYYYYD). Residues 308–318 (NDNDNYNDGDD) show a composition bias toward acidic residues. Residues 319–335 (EKEKEKEKEKEKEKENE) are compositionally biased toward basic and acidic residues. Residues 344–398 (TSMVNSEEWTEEEVNKMNEIRGKLSTADYNYWDKVSAHVKSKTAEQCQRKYNSRF) form the Myb-like domain. Residues 501–542 (NNNNNNNNNNNNNNNNNNNNNNNNNNNNNNNNNNNNNNNNNN) show a composition bias toward low complexity. Residues 632-641 (CEERKKKEDR) are compositionally biased toward basic and acidic residues. Over residues 642-651 (DVDEDGEDDY) the composition is skewed to acidic residues.

This chain is Myb-like protein W (mybW), found in Dictyostelium discoideum (Social amoeba).